Consider the following 491-residue polypeptide: Probable cytosol aminopeptidase (491 aa).

Residues Lys261 and Asp266 each coordinate Mn(2+). Lys273 is an active-site residue. Mn(2+) is bound by residues Asp285, Asp344, and Glu346. Residue Arg348 is part of the active site.

This sequence belongs to the peptidase M17 family. Mn(2+) is required as a cofactor.

It localises to the cytoplasm. The enzyme catalyses Release of an N-terminal amino acid, Xaa-|-Yaa-, in which Xaa is preferably Leu, but may be other amino acids including Pro although not Arg or Lys, and Yaa may be Pro. Amino acid amides and methyl esters are also readily hydrolyzed, but rates on arylamides are exceedingly low.. It carries out the reaction Release of an N-terminal amino acid, preferentially leucine, but not glutamic or aspartic acids.. In terms of biological role, presumably involved in the processing and regular turnover of intracellular proteins. Catalyzes the removal of unsubstituted N-terminal amino acids from various peptides. This is Probable cytosol aminopeptidase from Picosynechococcus sp. (strain ATCC 27264 / PCC 7002 / PR-6) (Agmenellum quadruplicatum).